The sequence spans 337 residues: Transcription initiation factor IIB (337 aa).

The TFIIB-type zinc finger occupies 37–68; the sequence is YTVECPECGSRALVRDYERAELVCSECGLVID. Residues Cys41, Cys44, Cys60, and Cys63 each contribute to the Zn(2+) site. A run of 2 repeats spans residues 154–237 and 248–329.

The protein belongs to the TFIIB family.

In terms of biological role, stabilizes TBP binding to an archaeal box-A promoter. Also responsible for recruiting RNA polymerase II to the pre-initiation complex (DNA-TBP-TFIIB). The sequence is that of Transcription initiation factor IIB from Methanothrix thermoacetophila (strain DSM 6194 / JCM 14653 / NBRC 101360 / PT) (Methanosaeta thermophila).